Reading from the N-terminus, the 129-residue chain is Large-conductance mechanosensitive channel (129 aa).

3 helical membrane passes run 14–34, 38–58, and 67–87; these read IIDL…VTSL, IIMP…SFVY, and LGVF…IFMA.

It belongs to the MscL family. Homopentamer.

The protein resides in the cell membrane. Channel that opens in response to stretch forces in the membrane lipid bilayer. May participate in the regulation of osmotic pressure changes within the cell. In Lysinibacillus sphaericus (strain C3-41), this protein is Large-conductance mechanosensitive channel.